Here is a 216-residue protein sequence, read N- to C-terminus: Uracil phosphoribosyltransferase (216 aa).

5-phospho-alpha-D-ribose 1-diphosphate-binding positions include Arg81, Arg106, and Asp135–Ser143. Uracil is bound by residues Ile200 and Gly205–Ala207. Asp206 lines the 5-phospho-alpha-D-ribose 1-diphosphate pocket.

Belongs to the UPRTase family. Mg(2+) serves as cofactor.

The enzyme catalyses UMP + diphosphate = 5-phospho-alpha-D-ribose 1-diphosphate + uracil. It functions in the pathway pyrimidine metabolism; UMP biosynthesis via salvage pathway; UMP from uracil: step 1/1. Allosterically activated by GTP. In terms of biological role, catalyzes the conversion of uracil and 5-phospho-alpha-D-ribose 1-diphosphate (PRPP) to UMP and diphosphate. In Porphyromonas gingivalis (strain ATCC 33277 / DSM 20709 / CIP 103683 / JCM 12257 / NCTC 11834 / 2561), this protein is Uracil phosphoribosyltransferase (upp).